Reading from the N-terminus, the 105-residue chain is Urease subunit beta (105 aa).

It belongs to the urease beta subunit family. In terms of assembly, heterotrimer of UreA (gamma), UreB (beta) and UreC (alpha) subunits. Three heterotrimers associate to form the active enzyme.

The protein localises to the cytoplasm. The enzyme catalyses urea + 2 H2O + H(+) = hydrogencarbonate + 2 NH4(+). It participates in nitrogen metabolism; urea degradation; CO(2) and NH(3) from urea (urease route): step 1/1. The protein is Urease subunit beta of Pseudomonas putida (strain W619).